Here is a 199-residue protein sequence, read N- to C-terminus: uncharacterized protein (199 aa).

To M.jannaschii MJ1356.

This is an uncharacterized protein from Methanocaldococcus jannaschii (strain ATCC 43067 / DSM 2661 / JAL-1 / JCM 10045 / NBRC 100440) (Methanococcus jannaschii).